The sequence spans 418 residues: UDP-N-acetylglucosamine 1-carboxyvinyltransferase (418 aa).

23–24 (KN) serves as a coordination point for phosphoenolpyruvate. Arg93 serves as a coordination point for UDP-N-acetyl-alpha-D-glucosamine. The active-site Proton donor is Asp117. Residues Asp305 and Val327 each coordinate UDP-N-acetyl-alpha-D-glucosamine.

Belongs to the EPSP synthase family. MurA subfamily.

It localises to the cytoplasm. The enzyme catalyses phosphoenolpyruvate + UDP-N-acetyl-alpha-D-glucosamine = UDP-N-acetyl-3-O-(1-carboxyvinyl)-alpha-D-glucosamine + phosphate. It participates in cell wall biogenesis; peptidoglycan biosynthesis. Functionally, cell wall formation. Adds enolpyruvyl to UDP-N-acetylglucosamine. In Mycobacterium leprae (strain TN), this protein is UDP-N-acetylglucosamine 1-carboxyvinyltransferase.